The following is a 286-amino-acid chain: Elongation factor Ts (286 aa).

The tract at residues 79–82 (TDFV) is involved in Mg(2+) ion dislocation from EF-Tu.

This sequence belongs to the EF-Ts family.

The protein localises to the cytoplasm. Functionally, associates with the EF-Tu.GDP complex and induces the exchange of GDP to GTP. It remains bound to the aminoacyl-tRNA.EF-Tu.GTP complex up to the GTP hydrolysis stage on the ribosome. The polypeptide is Elongation factor Ts (Wolbachia pipientis wMel).